Consider the following 142-residue polypeptide: Large ribosomal subunit protein uL13 (142 aa).

The protein belongs to the universal ribosomal protein uL13 family. Part of the 50S ribosomal subunit.

In terms of biological role, this protein is one of the early assembly proteins of the 50S ribosomal subunit, although it is not seen to bind rRNA by itself. It is important during the early stages of 50S assembly. This chain is Large ribosomal subunit protein uL13, found in Pseudomonas entomophila (strain L48).